Reading from the N-terminus, the 147-residue chain is Basic phospholipase A2 beta-bungarotoxin A1 chain (147 aa).

The signal sequence occupies residues 1–19; sequence MYPAHLLILSAVCVSLLGA. A propeptide spanning residues 20–27 is cleaved from the precursor; that stretch reads ANIPPHPL. Cystine bridges form between cysteine 54-cysteine 146, cysteine 56-cysteine 72, cysteine 71-cysteine 127, cysteine 78-cysteine 120, cysteine 88-cysteine 113, and cysteine 106-cysteine 118. Tyrosine 55, glycine 57, and glycine 59 together coordinate Ca(2+). Residue histidine 75 is part of the active site. A Ca(2+)-binding site is contributed by aspartate 76. Aspartate 121 is a catalytic residue.

Belongs to the phospholipase A2 family. Group I subfamily. D49 sub-subfamily. In terms of assembly, heterodimer; disulfide-linked. The A chains have phospholipase A2 activity and the B chains show homology with the basic protease inhibitors. Ca(2+) is required as a cofactor. As to expression, expressed by the venom gland.

It localises to the secreted. It catalyses the reaction a 1,2-diacyl-sn-glycero-3-phosphocholine + H2O = a 1-acyl-sn-glycero-3-phosphocholine + a fatty acid + H(+). Its function is as follows. Snake venom phospholipase A2 (PLA2) that inhibits neuromuscular transmission by blocking acetylcholine release from the nerve termini. PLA2 catalyzes the calcium-dependent hydrolysis of the 2-acyl groups in 3-sn-phosphoglycerides. This is Basic phospholipase A2 beta-bungarotoxin A1 chain from Bungarus caeruleus (Indian krait).